A 381-amino-acid polypeptide reads, in one-letter code: Queuine tRNA-ribosyltransferase (381 aa).

The active-site Proton acceptor is D96. Substrate contacts are provided by residues 96 to 100, D150, Q193, and G220; that span reads DSGGF. Residues 251-257 form an RNA binding region; sequence GVGSPDA. D270 acts as the Nucleophile in catalysis. The interval 275–279 is RNA binding; important for wobble base 34 recognition; the sequence is TRIAR. Residues C308, C310, C313, and H339 each contribute to the Zn(2+) site.

Belongs to the queuine tRNA-ribosyltransferase family. As to quaternary structure, homodimer. Within each dimer, one monomer is responsible for RNA recognition and catalysis, while the other monomer binds to the replacement base PreQ1. Zn(2+) serves as cofactor.

The catalysed reaction is 7-aminomethyl-7-carbaguanine + guanosine(34) in tRNA = 7-aminomethyl-7-carbaguanosine(34) in tRNA + guanine. It participates in tRNA modification; tRNA-queuosine biosynthesis. Its function is as follows. Catalyzes the base-exchange of a guanine (G) residue with the queuine precursor 7-aminomethyl-7-deazaguanine (PreQ1) at position 34 (anticodon wobble position) in tRNAs with GU(N) anticodons (tRNA-Asp, -Asn, -His and -Tyr). Catalysis occurs through a double-displacement mechanism. The nucleophile active site attacks the C1' of nucleotide 34 to detach the guanine base from the RNA, forming a covalent enzyme-RNA intermediate. The proton acceptor active site deprotonates the incoming PreQ1, allowing a nucleophilic attack on the C1' of the ribose to form the product. After dissociation, two additional enzymatic reactions on the tRNA convert PreQ1 to queuine (Q), resulting in the hypermodified nucleoside queuosine (7-(((4,5-cis-dihydroxy-2-cyclopenten-1-yl)amino)methyl)-7-deazaguanosine). The sequence is that of Queuine tRNA-ribosyltransferase from Bacillus velezensis (strain DSM 23117 / BGSC 10A6 / LMG 26770 / FZB42) (Bacillus amyloliquefaciens subsp. plantarum).